The primary structure comprises 196 residues: Pyridoxal 5'-phosphate synthase subunit PdxT (196 aa).

47–49 (GES) is a binding site for L-glutamine. The active-site Nucleophile is the cysteine 79. L-glutamine contacts are provided by residues arginine 106 and 134-135 (IR). Active-site charge relay system residues include histidine 170 and glutamate 172.

It belongs to the glutaminase PdxT/SNO family. As to quaternary structure, in the presence of PdxS, forms a dodecamer of heterodimers. Only shows activity in the heterodimer.

It catalyses the reaction aldehydo-D-ribose 5-phosphate + D-glyceraldehyde 3-phosphate + L-glutamine = pyridoxal 5'-phosphate + L-glutamate + phosphate + 3 H2O + H(+). The enzyme catalyses L-glutamine + H2O = L-glutamate + NH4(+). It functions in the pathway cofactor biosynthesis; pyridoxal 5'-phosphate biosynthesis. Catalyzes the hydrolysis of glutamine to glutamate and ammonia as part of the biosynthesis of pyridoxal 5'-phosphate. The resulting ammonia molecule is channeled to the active site of PdxS. This is Pyridoxal 5'-phosphate synthase subunit PdxT from Bacillus pumilus (strain SAFR-032).